Consider the following 165-residue polypeptide: MALNLQDKQAIVAEVSEVAKGALSAVVADSRGVTVDKMTELRKAGREAGVYMRVVRNTLLRRVVEGTQFECLKDAFVGPTLIAYSMEHPGAAARLFKDFAKANAKFEVKAAAFEGELIPASQIDRLATLPTYEEAIARLMATMKEASAGKLVRTLAAVRDAKEAA.

Belongs to the universal ribosomal protein uL10 family. Part of the ribosomal stalk of the 50S ribosomal subunit. The N-terminus interacts with L11 and the large rRNA to form the base of the stalk. The C-terminus forms an elongated spine to which L12 dimers bind in a sequential fashion forming a multimeric L10(L12)X complex.

Functionally, forms part of the ribosomal stalk, playing a central role in the interaction of the ribosome with GTP-bound translation factors. The polypeptide is Large ribosomal subunit protein uL10 (Enterobacter sp. (strain 638)).